A 230-amino-acid polypeptide reads, in one-letter code: UPF0173 metal-dependent hydrolase OEOE_1287 (230 aa).

The protein belongs to the UPF0173 family.

This Oenococcus oeni (strain ATCC BAA-331 / PSU-1) protein is UPF0173 metal-dependent hydrolase OEOE_1287.